The sequence spans 658 residues: Carnitine O-palmitoyltransferase 2, mitochondrial (658 aa).

Residues Met1–Leu25 constitute a mitochondrion transit peptide. Over Ser26–Leu178 the chain is Mitochondrial matrix. Lys69 is subject to N6-succinyllysine. Lys79 bears the N6-acetyllysine mark. Lys85 carries the N6-succinyllysine modification. The segment at residues Asn179–Asn208 is an intramembrane region (note=Mitochondrial inner membrane). Topologically, residues Ala209–Thr658 are mitochondrial matrix. N6-acetyllysine; alternate is present on Lys239. Lys239 is subject to N6-succinyllysine; alternate. Residue Lys305 is modified to N6-acetyllysine. His372 acts as the Proton acceptor in catalysis. Lys418 bears the N6-acetyllysine; alternate mark. Lys418 carries the N6-succinyllysine; alternate modification. Lys424 and Lys439 each carry N6-succinyllysine. Gly452–Asp464 is a binding site for CoA. (R)-carnitine is bound by residues Tyr486, Ser488, and Thr499. Residues Lys510 and Lys544 each carry the N6-acetyllysine; alternate modification. An N6-succinyllysine; alternate mark is found at Lys510 and Lys544.

It belongs to the carnitine/choline acetyltransferase family.

It is found in the mitochondrion inner membrane. It carries out the reaction (R)-carnitine + hexadecanoyl-CoA = O-hexadecanoyl-(R)-carnitine + CoA. The catalysed reaction is octanoyl-CoA + (R)-carnitine = O-octanoyl-(R)-carnitine + CoA. It catalyses the reaction decanoyl-CoA + (R)-carnitine = O-decanoyl-(R)-carnitine + CoA. The enzyme catalyses dodecanoyl-CoA + (R)-carnitine = O-dodecanoyl-R-carnitine + CoA. It carries out the reaction tetradecanoyl-CoA + (R)-carnitine = O-tetradecanoyl-(R)-carnitine + CoA. The catalysed reaction is (R)-carnitine + octadecanoyl-CoA = O-octadecanoyl-(R)-carnitine + CoA. It catalyses the reaction eicosanoyl-CoA + (R)-carnitine = O-eicosanoyl-(R)-carnitine + CoA. The enzyme catalyses (9Z)-tetradecenoyl-CoA + (R)-carnitine = O-(9Z)-tetradecenoyl-(R)-carnitine + CoA. It carries out the reaction (5Z)-tetradecenoyl-CoA + (R)-carnitine = O-(5Z)-tetradecenoyl-(R)-carnitine + CoA. The catalysed reaction is (R)-carnitine + (9Z)-octadecenoyl-CoA = O-(9Z)-octadecenoyl-(R)-carnitine + CoA. It catalyses the reaction 4,8-dimethylnonanoyl-CoA + (R)-carnitine = O-4,8-dimethylnonanoyl-(R)-carnitine + CoA. It functions in the pathway lipid metabolism; fatty acid beta-oxidation. Functionally, involved in the intramitochondrial synthesis of acylcarnitines from accumulated acyl-CoA metabolites. Reconverts acylcarnitines back into the respective acyl-CoA esters that can then undergo beta-oxidation, an essential step for the mitochondrial uptake of long-chain fatty acids and their subsequent beta-oxidation in the mitochondrion. Active with medium (C8-C12) and long-chain (C14-C18) acyl-CoA esters. This Mus musculus (Mouse) protein is Carnitine O-palmitoyltransferase 2, mitochondrial.